A 338-amino-acid chain; its full sequence is Phosphate acyltransferase (338 aa).

It belongs to the PlsX family. In terms of assembly, homodimer. Probably interacts with PlsY.

The protein localises to the cytoplasm. It carries out the reaction a fatty acyl-[ACP] + phosphate = an acyl phosphate + holo-[ACP]. The protein operates within lipid metabolism; phospholipid metabolism. In terms of biological role, catalyzes the reversible formation of acyl-phosphate (acyl-PO(4)) from acyl-[acyl-carrier-protein] (acyl-ACP). This enzyme utilizes acyl-ACP as fatty acyl donor, but not acyl-CoA. This chain is Phosphate acyltransferase, found in Mannheimia succiniciproducens (strain KCTC 0769BP / MBEL55E).